Consider the following 150-residue polypeptide: Protein SprT-like (150 aa).

A SprT-like domain is found at 6 to 147; the sequence is LQKLTEDISE…CGKCRGKIKR (142 aa). H67 provides a ligand contact to Zn(2+). E68 is an active-site residue. H71 lines the Zn(2+) pocket.

The protein belongs to the SprT family. Zn(2+) is required as a cofactor.

Its subcellular location is the cytoplasm. The protein is Protein SprT-like (ydcK) of Bacillus subtilis (strain 168).